An 82-amino-acid polypeptide reads, in one-letter code: Large ribosomal subunit protein bL27 (82 aa).

Positions 1 to 20 are disordered; it reads MATKKAGGSSSNGRDSIGKR.

Belongs to the bacterial ribosomal protein bL27 family.

The sequence is that of Large ribosomal subunit protein bL27 from Neorickettsia sennetsu (strain ATCC VR-367 / Miyayama) (Ehrlichia sennetsu).